A 196-amino-acid polypeptide reads, in one-letter code: ATP-dependent Clp protease proteolytic subunit (196 aa).

Serine 101 (nucleophile) is an active-site residue. The active site involves histidine 126.

Belongs to the peptidase S14 family. As to quaternary structure, component of the chloroplastic Clp protease core complex.

The protein localises to the plastid. The protein resides in the chloroplast stroma. The enzyme catalyses Hydrolysis of proteins to small peptides in the presence of ATP and magnesium. alpha-casein is the usual test substrate. In the absence of ATP, only oligopeptides shorter than five residues are hydrolyzed (such as succinyl-Leu-Tyr-|-NHMec, and Leu-Tyr-Leu-|-Tyr-Trp, in which cleavage of the -Tyr-|-Leu- and -Tyr-|-Trp bonds also occurs).. In terms of biological role, cleaves peptides in various proteins in a process that requires ATP hydrolysis. Has a chymotrypsin-like activity. Plays a major role in the degradation of misfolded proteins. This Aethionema cordifolium (Lebanon stonecress) protein is ATP-dependent Clp protease proteolytic subunit.